The sequence spans 380 residues: Putative 8-amino-7-oxononanoate synthase (380 aa).

Arg-22 is a binding site for substrate. Pyridoxal 5'-phosphate is bound at residue 109-110; sequence GY. His-134 is a binding site for substrate. Residues Ser-182, 207–210, and 238–241 each bind pyridoxal 5'-phosphate; these read DEAH and TLSK. Position 241 is an N6-(pyridoxal phosphate)lysine (Lys-241). Thr-353 contacts substrate.

This sequence belongs to the class-II pyridoxal-phosphate-dependent aminotransferase family. BioF subfamily. In terms of assembly, homodimer. The cofactor is pyridoxal 5'-phosphate.

It catalyses the reaction 6-carboxyhexanoyl-[ACP] + L-alanine + H(+) = (8S)-8-amino-7-oxononanoate + holo-[ACP] + CO2. The protein operates within cofactor biosynthesis; biotin biosynthesis. In terms of biological role, catalyzes the decarboxylative condensation of pimeloyl-[acyl-carrier protein] and L-alanine to produce 8-amino-7-oxononanoate (AON), [acyl-carrier protein], and carbon dioxide. In Gloeothece citriformis (strain PCC 7424) (Cyanothece sp. (strain PCC 7424)), this protein is Putative 8-amino-7-oxononanoate synthase (bioF).